The sequence spans 123 residues: Ribosome-binding factor A (123 aa).

This sequence belongs to the RbfA family. Monomer. Binds 30S ribosomal subunits, but not 50S ribosomal subunits or 70S ribosomes.

The protein localises to the cytoplasm. Functionally, one of several proteins that assist in the late maturation steps of the functional core of the 30S ribosomal subunit. Associates with free 30S ribosomal subunits (but not with 30S subunits that are part of 70S ribosomes or polysomes). Required for efficient processing of 16S rRNA. May interact with the 5'-terminal helix region of 16S rRNA. The protein is Ribosome-binding factor A of Koribacter versatilis (strain Ellin345).